A 397-amino-acid chain; its full sequence is Purine ribonucleoside efflux pump NepI (397 aa).

Residues 1–21 (MNENIAEKFRADGVARPNWSA) are Cytoplasmic-facing. Residues 22–42 (VFAVAFCVACLITVEFLPVSL) traverse the membrane as a helical segment. Topologically, residues 43–54 (LTPMAQDLGISE) are periplasmic. The helical transmembrane segment at 55–75 (GVAGQSVTVTAFVAMFSSLFI) threads the bilayer. Residues 76-85 (TQIIQATDRR) are Cytoplasmic-facing. A helical membrane pass occupies residues 86-106 (YIVILFAVLLTASCLMVSFAN). Ser107 is a topological domain (periplasmic). The chain crosses the membrane as a helical span at residues 108 to 128 (FTLLLLGRACLGLALGGFWAM). Residues 129 to 147 (SASLTMRLVPARTVPKALS) lie on the Cytoplasmic side of the membrane. Residues 148–168 (VIFGAVSIALVIAAPLGSFLG) traverse the membrane as a helical segment. The Periplasmic segment spans residues 169-175 (GIIGWRN). The chain crosses the membrane as a helical span at residues 176–196 (VFNAAAVMGVLCVIWVVKSLP). The Cytoplasmic segment spans residues 197–215 (SLPGEPSHQKQNMFSLLQR). Residues 216 to 236 (PGVMAGMIAIFMSFAGQFAFF) form a helical membrane-spanning segment. At 237 to 255 (TYIRPVYMNLAGFDVDGLT) the chain is on the periplasmic side. Residues 256-276 (LVLLSFGIASFVGTSFSSYVL) form a helical membrane-spanning segment. The Cytoplasmic portion of the chain corresponds to 277-281 (KRSVK). Residues 282–302 (LALAGAPLLLALSALTLIVWG) traverse the membrane as a helical segment. Residues 303-305 (SDK) lie on the Periplasmic side of the membrane. The chain crosses the membrane as a helical span at residues 306–326 (TVAAVIAIIWGLAFALVPVGW). The Cytoplasmic segment spans residues 327 to 343 (STWITRSLADQAEKAGS). The helical transmembrane segment at 344 to 364 (IQVAVIQLANTCGAAVGGYAL) threads the bilayer. Residues 365 to 366 (DN) are Periplasmic-facing. Residues 367–387 (FGLLSPLALSGGLMLLTALVV) traverse the membrane as a helical segment. Residues 388–397 (AAKVRITPMS) are Cytoplasmic-facing.

The protein belongs to the major facilitator superfamily. DHA1 family. NepI (TC 2.A.1.2.26) subfamily.

The protein resides in the cell inner membrane. The catalysed reaction is inosine(in) + H(+)(out) = inosine(out) + H(+)(in). It catalyses the reaction guanosine(in) + H(+)(out) = guanosine(out) + H(+)(in). In terms of biological role, involved in the efflux of purine ribonucleosides, such as inosine and guanosine. In Salmonella paratyphi B (strain ATCC BAA-1250 / SPB7), this protein is Purine ribonucleoside efflux pump NepI.